Reading from the N-terminus, the 329-residue chain is HTH-type transcriptional regulator ArgR (329 aa).

Residues 214–312 (TQAVLLMEAN…GVTPREDRNQ (99 aa)) form the HTH araC/xylS-type domain. DNA-binding regions (H-T-H motif) lie at residues 231–252 (DEIA…KQYL) and 279–302 (IIQI…RNFF). The tract at residues 307-329 (REDRNQRRGGSAFETTFTPVERG) is disordered. Positions 319-329 (FETTFTPVERG) are enriched in polar residues.

In terms of biological role, argR could be a transcriptional activator of the dauBAR operon in response to the presence of L-Arg. The protein is HTH-type transcriptional regulator ArgR (argR) of Pseudomonas aeruginosa (strain ATCC 15692 / DSM 22644 / CIP 104116 / JCM 14847 / LMG 12228 / 1C / PRS 101 / PAO1).